The sequence spans 312 residues: Olfactory receptor 1D5 (312 aa).

Topologically, residues 1–25 (MDGDNQSENSQFLLLGISESPEQQR) are extracellular. Asn-5 is a glycosylation site (N-linked (GlcNAc...) asparagine). A helical membrane pass occupies residues 26 to 49 (ILFWMFLSMYLVTVLGNVLIILAI). The Cytoplasmic segment spans residues 50-57 (SSDSHLHT). A helical transmembrane segment spans residues 58–79 (PMYFFLANLSFTDLFFVTNTIP). The Extracellular segment spans residues 80–100 (KMLVNFQSQNKAISYAGCLTQ). Cys-97 and Cys-189 are joined by a disulfide. A helical transmembrane segment spans residues 101–120 (LYFLVSLVTLDNLILAVMAY). Topologically, residues 121 to 140 (DRYVATCCPLHYVTAMSPGL) are cytoplasmic. A helical transmembrane segment spans residues 141-158 (CVLLLSLCWGLSVLYGLL). Residues 159–196 (LTFLLTRVTFCGPREIHYLFCDMYILLWLACSNTHIIH) lie on the Extracellular side of the membrane. A helical transmembrane segment spans residues 197–220 (TALIATGCFIFLTPLGFMTTSYVR). Over 221–237 (IVRTILQMPSASKKYKT) the chain is Cytoplasmic. Residues 238-260 (FSTCASHLGVVSLFYGTLAMVYL) form a helical membrane-spanning segment. Residues 261 to 271 (QPLHTYSMKDS) lie on the Extracellular side of the membrane. Residues 272-291 (VATVMYAVLTPMMNPFIYRL) form a helical membrane-spanning segment. At 292 to 312 (RNKDMHGAPGRVLWRPFQRPK) the chain is on the cytoplasmic side.

The protein belongs to the G-protein coupled receptor 1 family.

The protein resides in the cell membrane. Functionally, odorant receptor. The polypeptide is Olfactory receptor 1D5 (OR1D5) (Homo sapiens (Human)).